Here is a 146-residue protein sequence, read N- to C-terminus: UPF0178 protein CTC_02403 (146 aa).

Belongs to the UPF0178 family.

The polypeptide is UPF0178 protein CTC_02403 (Clostridium tetani (strain Massachusetts / E88)).